Reading from the N-terminus, the 130-residue chain is MADNQYYGTGRRKNSTARVFLRPGSGNIKINNRELNEYFGRETAQMVVRQPLELVEMTEKFDMYITVSGGGTTGQAGAIRHGITRALMQYDEALRGPLRKEGYVTRDARQVERKKIGLHKARKRPQFSKR.

It belongs to the universal ribosomal protein uS9 family.

The polypeptide is Small ribosomal subunit protein uS9 (Idiomarina loihiensis (strain ATCC BAA-735 / DSM 15497 / L2-TR)).